Here is a 99-residue protein sequence, read N- to C-terminus: Small ribosomal subunit protein cS23 (99 aa).

Belongs to the chloroplast-specific ribosomal protein cS23 family. Part of the 30S ribosomal subunit.

The protein resides in the plastid. It is found in the chloroplast. Probably a ribosomal protein or a ribosome-associated protein. The sequence is that of Small ribosomal subunit protein cS23 from Gracilaria tenuistipitata var. liui (Red alga).